Consider the following 273-residue polypeptide: Type II pantothenate kinase (273 aa).

8-15 (DAGGTLTK) is an ATP binding site. Glu-76 serves as the catalytic Proton acceptor. Residues Thr-105, 127 to 131 (GGTIM), Phe-143, and Ser-230 contribute to the ATP site.

The protein belongs to the type II pantothenate kinase family. As to quaternary structure, homodimer.

The protein resides in the cytoplasm. It carries out the reaction (R)-pantothenate + ATP = (R)-4'-phosphopantothenate + ADP + H(+). It participates in cofactor biosynthesis; coenzyme A biosynthesis; CoA from (R)-pantothenate: step 1/5. Its function is as follows. Catalyzes the phosphorylation of pantothenate (Pan), the first step in CoA biosynthesis. The sequence is that of Type II pantothenate kinase from Bacillus cereus (strain G9842).